A 251-amino-acid polypeptide reads, in one-letter code: Ubiquinone/menaquinone biosynthesis C-methyltransferase UbiE (251 aa).

S-adenosyl-L-methionine contacts are provided by residues T74, D95, 123–124 (NA), and S140.

It belongs to the class I-like SAM-binding methyltransferase superfamily. MenG/UbiE family.

The enzyme catalyses a 2-demethylmenaquinol + S-adenosyl-L-methionine = a menaquinol + S-adenosyl-L-homocysteine + H(+). It catalyses the reaction a 2-methoxy-6-(all-trans-polyprenyl)benzene-1,4-diol + S-adenosyl-L-methionine = a 5-methoxy-2-methyl-3-(all-trans-polyprenyl)benzene-1,4-diol + S-adenosyl-L-homocysteine + H(+). It participates in quinol/quinone metabolism; menaquinone biosynthesis; menaquinol from 1,4-dihydroxy-2-naphthoate: step 2/2. Its pathway is cofactor biosynthesis; ubiquinone biosynthesis. Functionally, methyltransferase required for the conversion of demethylmenaquinol (DMKH2) to menaquinol (MKH2) and the conversion of 2-polyprenyl-6-methoxy-1,4-benzoquinol (DDMQH2) to 2-polyprenyl-3-methyl-6-methoxy-1,4-benzoquinol (DMQH2). In Enterobacter sp. (strain 638), this protein is Ubiquinone/menaquinone biosynthesis C-methyltransferase UbiE.